We begin with the raw amino-acid sequence, 156 residues long: Lipoprotein signal peptidase (156 aa).

The next 3 membrane-spanning stretches (helical) occupy residues 5 to 25, 64 to 84, and 89 to 109; these read FKFIFYFWGAFVLVFALDQWV, YLHLALIGVLFIYLFWQKTLL, and IAFGMMLGAGVSNLLDRFIYG. Residues Asp-113 and Asp-130 contribute to the active site. The helical transmembrane segment at 122-142 threads the bilayer; the sequence is NFAIFNVADVMINISVALILI.

It belongs to the peptidase A8 family.

The protein localises to the cell inner membrane. The catalysed reaction is Release of signal peptides from bacterial membrane prolipoproteins. Hydrolyzes -Xaa-Yaa-Zaa-|-(S,diacylglyceryl)Cys-, in which Xaa is hydrophobic (preferably Leu), and Yaa (Ala or Ser) and Zaa (Gly or Ala) have small, neutral side chains.. It functions in the pathway protein modification; lipoprotein biosynthesis (signal peptide cleavage). Functionally, this protein specifically catalyzes the removal of signal peptides from prolipoproteins. The protein is Lipoprotein signal peptidase of Campylobacter jejuni subsp. doylei (strain ATCC BAA-1458 / RM4099 / 269.97).